A 20-amino-acid chain; its full sequence is Small ribosomal subunit protein bS20 (20 aa).

It belongs to the bacterial ribosomal protein bS20 family.

Functionally, binds directly to 16S ribosomal RNA. The chain is Small ribosomal subunit protein bS20 (rpsT) from Brevundimonas diminuta (Pseudomonas diminuta).